The primary structure comprises 206 residues: Large ribosomal subunit protein uL4 (206 aa).

Residues 44–87 (KRQGTQKAKTRSEVRGGGRKPWRQKGTGHARQGSTRSPQWTGGG) form a disordered region. The span at 60–71 (GGRKPWRQKGTG) shows a compositional bias: basic residues.

It belongs to the universal ribosomal protein uL4 family. In terms of assembly, part of the 50S ribosomal subunit.

Its function is as follows. One of the primary rRNA binding proteins, this protein initially binds near the 5'-end of the 23S rRNA. It is important during the early stages of 50S assembly. It makes multiple contacts with different domains of the 23S rRNA in the assembled 50S subunit and ribosome. Functionally, forms part of the polypeptide exit tunnel. The sequence is that of Large ribosomal subunit protein uL4 from Agathobacter rectalis (strain ATCC 33656 / DSM 3377 / JCM 17463 / KCTC 5835 / VPI 0990) (Eubacterium rectale).